We begin with the raw amino-acid sequence, 230 residues long: Androgen-dependent TFPI-regulating protein (230 aa).

The Cytoplasmic portion of the chain corresponds to 1–7 (MTKTTTC). A helical transmembrane segment spans residues 8 to 28 (LYHFVVLNWYIFLNYYIPQIG). Over 29–45 (KDEEKLKEFHDGGRSKY) the chain is Extracellular. The chain crosses the membrane as a helical span at residues 46-66 (LTLLNLLLQAVFFGVACLDDV). Residues 67 to 85 (LKRVIGRKDIKFITYFRDL) are Cytoplasmic-facing. A helical membrane pass occupies residues 86 to 106 (LFTTLAFPLSTFVFLVFWSLF). Over 107–120 (HYDRSLVYPKGLDD) the chain is Extracellular. Residues 121 to 141 (FFPAWVNHAMHTSIFPFSLAE) form a helical membrane-spanning segment. The Cytoplasmic portion of the chain corresponds to 142–155 (TVLRPHNYPSKKLG). A helical transmembrane segment spans residues 156–173 (LSLLGACNFAYIIRILWR). The Extracellular segment spans residues 174–190 (YVQTGNWVYPVFASLSP). Residues 191-211 (LGIILFFSASYILSASLYLFG) form a helical membrane-spanning segment. The Cytoplasmic portion of the chain corresponds to 212-230 (EKINHWKWGATVKPRMKKN).

This sequence belongs to the AIG1 family.

The protein resides in the cell membrane. The catalysed reaction is 9-hexadecanoyloxy-octadecanoate + H2O = 9-hydroxy-octadecanoate + hexadecanoate + H(+). The enzyme catalyses 12-hexadecanoyloxy-octadecanoate + H2O = 12-hydroxyoctadecanoate + hexadecanoate + H(+). It carries out the reaction 9-(9Z-hexadecenoyloxy)-octadecanoate + H2O = (9Z)-hexadecenoate + 9-hydroxy-octadecanoate + H(+). It catalyses the reaction 12-(9Z-hexadecenoyloxy)-octadecanoate + H2O = 12-hydroxyoctadecanoate + (9Z)-hexadecenoate + H(+). The catalysed reaction is 13-(9Z-hexadecenoyloxy)-octadecanoate + H2O = 13-hydroxy-octadecanoate + (9Z)-hexadecenoate + H(+). The enzyme catalyses 9-octadecanoyloxy-octadecanoate + H2O = 9-hydroxy-octadecanoate + octadecanoate + H(+). It carries out the reaction 12-octadecanoyloxy-octadecanoate + H2O = 12-hydroxyoctadecanoate + octadecanoate + H(+). It catalyses the reaction 13-octadecanoyloxy-octadecanoate + H2O = 13-hydroxy-octadecanoate + octadecanoate + H(+). The catalysed reaction is 9-(9Z-octadecenoyloxy)-octadecanoate + H2O = 9-hydroxy-octadecanoate + (9Z)-octadecenoate + H(+). The enzyme catalyses 12-(9Z-octadecenoyloxy)-octadecanoate + H2O = 12-hydroxyoctadecanoate + (9Z)-octadecenoate + H(+). It carries out the reaction 13-(9Z-octadecenoyloxy)-octadecanoate + H2O = 13-hydroxy-octadecanoate + (9Z)-octadecenoate + H(+). It catalyses the reaction 5-(9Z-octadecenoyloxy)-octadecanoate + H2O = 5-hydroxy-octadecanoate + (9Z)-octadecenoate + H(+). In terms of biological role, hydrolyzes bioactive fatty-acid esters of hydroxy-fatty acids (FAHFAs), but not other major classes of lipids. Shows a preference for FAHFAs with branching distal from the carboxylate head group of the lipids. Regulates the expression and the cell-associated anticoagulant activity of the inhibitor TFPI in endothelial cells (in vitro). The protein is Androgen-dependent TFPI-regulating protein (Adtrp) of Rattus norvegicus (Rat).